A 750-amino-acid chain; its full sequence is Sulfhydryl oxidase 1 (750 aa).

The first 32 residues, 1-32 (MGRCNRGSGPPSSLLLLLLLLLWLLAVPGASA), serve as a signal peptide directing secretion. Residues 39 to 159 (YSPSDPLTLL…RERLIDALES (121 aa)) enclose the Thioredoxin domain. Catalysis depends on nucleophile residues Cys73 and Cys76. 2 disulfides stabilise this stretch: Cys73/Cys76 and Cys104/Cys113. Residues Asn133 and Asn246 are each glycosylated (N-linked (GlcNAc...) asparagine). A disulfide bridge connects residues Cys396 and Cys408. Residues 399-506 (SEPHFRGFPC…EDPQFPKVQW (108 aa)) enclose the ERV/ALR sulfhydryl oxidase domain. Residues Arg404, Trp411, and His415 each contribute to the FAD site. A Phosphoserine modification is found at Ser429. A disulfide bond links Cys452 and Cys455. FAD is bound by residues Asp454, His458, 481–488 (WSSHNRVN), Lys503, and Trp506. Cysteines 512 and 515 form a disulfide. An N-linked (GlcNAc...) asparagine glycan is attached at Asn578. Residues 578-645 (NSTVDLGKPE…REQPRGQWHL (68 aa)) form a disordered region. Residues 624 to 639 (PPEHMAELQTNEREQP) are compositionally biased toward basic and acidic residues. A helical membrane pass occupies residues 713–733 (ISLCVGLYSLSFMGLLAMYAY).

Belongs to the quiescin-sulfhydryl oxidase (QSOX) family. As to quaternary structure, monomer. The cofactor is FAD. N-glycosylated. O-glycosylated on Thr and Ser residues.

It is found in the golgi apparatus membrane. The protein resides in the secreted. The enzyme catalyses 2 R'C(R)SH + O2 = R'C(R)S-S(R)CR' + H2O2. In terms of biological role, catalyzes the oxidation of sulfhydryl groups in peptide and protein thiols to disulfides with the reduction of oxygen to hydrogen peroxide. Plays a role in disulfide bond formation in a variety of extracellular proteins. In fibroblasts, required for normal incorporation of laminin into the extracellular matrix, and thereby for normal cell-cell adhesion and cell migration. In Pongo abelii (Sumatran orangutan), this protein is Sulfhydryl oxidase 1 (QSOX1).